A 359-amino-acid polypeptide reads, in one-letter code: Src kinase-associated phosphoprotein 1 (359 aa).

Positions 107 to 210 (NVIKQGYLEK…WVDQISFLLK (104 aa)) constitute a PH domain. A phosphotyrosine mark is found at Y142, Y219, and Y232. Acidic residues predominate over residues 219-237 (YEEDEEEEEKEETYDDIDG). The segment at 219 to 239 (YEEDEEEEEKEETYDDIDGFD) is disordered. 2 positions are modified to phosphotyrosine; by FYN: Y271 and Y295. The tract at residues 290–295 (RKGVDY) is interaction with FYB1. An SH3 domain is found at 294–355 (DYASYYQGLW…PKEYLTTAFE (62 aa)).

Belongs to the SKAP family. As to quaternary structure, homodimer. Interacts with FYN. Interacts with PTPRC. Interacts with GRB2 when phosphorylated on Tyr-271. Interacts with FYB1, which is required for SKAP2 protein stability. Part of a complex consisting of SKAP1, FYB1 and CLNK. Interacts with RASGRP1. Interacts with FYB2. Phosphorylated on tyrosines. Phosphorylation by FYN on Tyr-271 is required for GRB2 interaction. Phosphorylation by FYN on Tyr-295 abolishes interaction with FYB1. Tyr-232 is dephosphorylated by PTPRC. As to expression, highly expressed in thymocytes and peripheral blood lymphocytes. Also expressed in spleen cells and testis. Present in T-cells (at protein level).

Its subcellular location is the cytoplasm. It is found in the nucleus. The protein localises to the cell membrane. In terms of biological role, positively regulates T-cell receptor signaling by enhancing the MAP kinase pathway. Required for optimal conjugation between T-cells and antigen-presenting cells by promoting the clustering of integrin ITGAL on the surface of T-cells. May be involved in high affinity immunoglobulin epsilon receptor signaling in mast cells. The protein is Src kinase-associated phosphoprotein 1 (SKAP1) of Homo sapiens (Human).